A 166-amino-acid chain; its full sequence is MSEAIIAKKAELVDVVAEKMKAAASIVVVDARGLTVEQDTVLRRELRGSEVEYKVIKNSILRRAAEKAGLEDLASVFVGPSAVAFSNEDVIAPAKILNDFSKNAEALEIKGGAIEGAVASKEEILALATLPNREGLLSMLLSVLQAPVRNVALAVKAVAESKEDAA.

The protein belongs to the universal ribosomal protein uL10 family. In terms of assembly, part of the ribosomal stalk of the 50S ribosomal subunit. The N-terminus interacts with L11 and the large rRNA to form the base of the stalk. The C-terminus forms an elongated spine to which L12 dimers bind in a sequential fashion forming a multimeric L10(L12)X complex.

Its function is as follows. Forms part of the ribosomal stalk, playing a central role in the interaction of the ribosome with GTP-bound translation factors. The chain is Large ribosomal subunit protein uL10 from Streptococcus pneumoniae (strain ATCC 700669 / Spain 23F-1).